The chain runs to 232 residues: 7-cyano-7-deazaguanine synthase (232 aa).

An ATP-binding site is contributed by 8 to 18 (FSGGQDSTTCL). 4 residues coordinate Zn(2+): Cys189, Cys198, Cys201, and Cys204.

This sequence belongs to the QueC family. It depends on Zn(2+) as a cofactor.

It carries out the reaction 7-carboxy-7-deazaguanine + NH4(+) + ATP = 7-cyano-7-deazaguanine + ADP + phosphate + H2O + H(+). It participates in purine metabolism; 7-cyano-7-deazaguanine biosynthesis. Functionally, catalyzes the ATP-dependent conversion of 7-carboxy-7-deazaguanine (CDG) to 7-cyano-7-deazaguanine (preQ(0)). The polypeptide is 7-cyano-7-deazaguanine synthase (Yersinia pseudotuberculosis serotype O:1b (strain IP 31758)).